A 459-amino-acid chain; its full sequence is Ammonium transporter Rh type B (459 aa).

The Cytoplasmic segment spans residues Met1–Arg10. The chain crosses the membrane as a helical span at residues Leu11–Glu31. The Extracellular portion of the chain corresponds to Tyr32–Tyr58. The N-linked (GlcNAc...) asparagine glycan is linked to Asn45. Residues Pro59–Leu79 traverse the membrane as a helical segment. Residues Gln80–Met87 are Cytoplasmic-facing. The helical transmembrane segment at Gly88–Phe108 threads the bilayer. Residues His109 to Thr121 lie on the Extracellular side of the membrane. The helical transmembrane segment at Ser122–Gly142 threads the bilayer. Over Lys143–Leu149 the chain is Cytoplasmic. The helical transmembrane segment at Leu150 to Ile170 threads the bilayer. Residues Leu171–Ala176 lie on the Extracellular side of the membrane. Residues Gly177 to Leu197 form a helical membrane-spanning segment. Residues His198–Asp216 are Cytoplasmic-facing. A helical transmembrane segment spans residues Leu217 to Ile237. Over Thr238–Ala248 the chain is Extracellular. The helical transmembrane segment at Ala249–Val269 threads the bilayer. Over Asn270 to Lys274 the chain is Cytoplasmic. A helical membrane pass occupies residues Leu275–Gly295. Glu296 is a topological domain (extracellular). The chain crosses the membrane as a helical span at residues Met297 to Leu317. Topologically, residues Gly318–Asn340 are cytoplasmic. A helical transmembrane segment spans residues Leu341–Ser361. Topologically, residues Arg362–Ala392 are extracellular. The helical transmembrane segment at Ile393–Leu413 threads the bilayer. At Lys414 to Ser459 the chain is on the cytoplasmic side. The disordered stretch occupies residues Glu440–Ser459.

Belongs to the ammonium transporter (TC 2.A.49) family. Rh subfamily.

It localises to the basolateral cell membrane. It is found in the cytoplasmic vesicle membrane. Functionally, functions as an ammonia transporter. May play a role in the elimination of ammonia in the gill. In Danio rerio (Zebrafish), this protein is Ammonium transporter Rh type B (rhbg).